Reading from the N-terminus, the 251-residue chain is Triosephosphate isomerase (251 aa).

9 to 11 (NWK) lines the substrate pocket. The active-site Electrophile is His-94. Glu-166 serves as the catalytic Proton acceptor. Residues Gly-172, Ser-211, and 232 to 233 (GG) each bind substrate.

Belongs to the triosephosphate isomerase family. Homodimer.

The protein resides in the cytoplasm. The enzyme catalyses D-glyceraldehyde 3-phosphate = dihydroxyacetone phosphate. Its pathway is carbohydrate biosynthesis; gluconeogenesis. It functions in the pathway carbohydrate degradation; glycolysis; D-glyceraldehyde 3-phosphate from glycerone phosphate: step 1/1. Functionally, involved in the gluconeogenesis. Catalyzes stereospecifically the conversion of dihydroxyacetone phosphate (DHAP) to D-glyceraldehyde-3-phosphate (G3P). This chain is Triosephosphate isomerase, found in Xanthomonas oryzae pv. oryzae (strain MAFF 311018).